The following is a 468-amino-acid chain: 3-isopropylmalate dehydratase large subunit (468 aa).

3 residues coordinate [4Fe-4S] cluster: C346, C406, and C409.

The protein belongs to the aconitase/IPM isomerase family. LeuC type 1 subfamily. As to quaternary structure, heterodimer of LeuC and LeuD. [4Fe-4S] cluster serves as cofactor.

The enzyme catalyses (2R,3S)-3-isopropylmalate = (2S)-2-isopropylmalate. The protein operates within amino-acid biosynthesis; L-leucine biosynthesis; L-leucine from 3-methyl-2-oxobutanoate: step 2/4. Catalyzes the isomerization between 2-isopropylmalate and 3-isopropylmalate, via the formation of 2-isopropylmaleate. The protein is 3-isopropylmalate dehydratase large subunit of Cyanothece sp. (strain PCC 7425 / ATCC 29141).